Here is a 614-residue protein sequence, read N- to C-terminus: MALPTQQADELRLYQQTLLQDGLKDMLDHDNFIDCVLKIQGKEFPCHRLVLAACSPYFRAMFLSNLEEGKKKEIDLEDVDPDVMGKILHYIYTSEIEITEKNVQDIFSVANMFQIPSIFTVCVSFLQKKLCLSNCLAIFRLGLLLDCPRLAVSARDFVCDRFHLIARDEEFYDLSPDELIAVISSDSLNIEKEEEVFEVVLKWALKEKEKRAKALPIIFESIRFRLIPQDYIKNKVEKHELVKSDKELLKKLQMVKDAQEGKLPAAVKKTPSKASEGKDGEGVVNGDLEEEEEALPGILNDTLRFGMFLKDMIFMISDTGAVAYDPSANECFFASLSAQIPKNHVSLATKENQLFVAGGLYYNEENKDDPLSSYFLQFDHLDSDWLGMPPVPSARCLFGLGESDNSIYLIGGKELKEGEQTLDTVLCYDRPSFKWGESDPLPYQVYGHTVVSHDNLVYVLGGKGNEKKCLKRVCVYNPKKFEWKDLAPMKTARSLFGSTVHKGKILIAAGVTDTGLTNTIEAYDVKTNKWEEFTEFPQERSSLSLVSMNGTLYAIGGFATTENESGEFVPTELNDIWRFNEEEKKWEGILREIRYASGATFVAARLNILRLTKM.

One can recognise a BTB domain in the interval 33 to 100; the sequence is IDCVLKIQGK…IYTSEIEITE (68 aa). One can recognise a BACK domain in the interval 135–237; that stretch reads CLAIFRLGLL…PQDYIKNKVE (103 aa). Kelch repeat units lie at residues 353–405, 406–455, 456–503, 505–550, and 552–606; these read QLFV…ESDN, SIYL…SHDN, LVYV…VHKG, ILIA…SMNG, and LYAI…AARL.

The protein belongs to the KLHL40 family. Component of the BCR(KLHL40) E3 ubiquitin ligase complex.

The protein resides in the cytoplasm. It is found in the myofibril. It localises to the sarcomere. The protein localises to the a band. Its subcellular location is the i band. Its function is as follows. Substrate-specific adapter of a BCR (BTB-CUL3-RBX1) E3 ubiquitin ligase complex that acts as a key regulator of skeletal muscle development. This chain is Kelch-like protein 40 (klhl40), found in Xenopus tropicalis (Western clawed frog).